Here is a 301-residue protein sequence, read N- to C-terminus: Chitosanase (301 aa).

A signal peptide spans 1–42 (MHMSNARPSKSRTKFLLAFLCFTLMASLFGATALFGPSKAAA). The active-site Proton donor is Glu79. A disulfide bridge connects residues Cys92 and Cys166. Residue Asp97 is the Nucleophile of the active site.

Belongs to the glycosyl hydrolase 46 family.

Its subcellular location is the secreted. The catalysed reaction is Endohydrolysis of beta-(1-&gt;4)-linkages between D-glucosamine residues in a partly acetylated chitosan.. Aids in the defense against invading fungal pathogens by degrading their cell wall chitosan. The polypeptide is Chitosanase (csn) (Niallia circulans (Bacillus circulans)).